Consider the following 558-residue polypeptide: Urocanate hydratase (558 aa).

Residues 54-55 (GG), Q132, 178-180 (GMG), E198, 244-245 (NA), 265-269 (QTSAH), 275-276 (YL), and Y324 each bind NAD(+). C412 is a catalytic residue. G494 serves as a coordination point for NAD(+).

This sequence belongs to the urocanase family. The cofactor is NAD(+).

Its subcellular location is the cytoplasm. The enzyme catalyses 4-imidazolone-5-propanoate = trans-urocanate + H2O. Its pathway is amino-acid degradation; L-histidine degradation into L-glutamate; N-formimidoyl-L-glutamate from L-histidine: step 2/3. Functionally, catalyzes the conversion of urocanate to 4-imidazolone-5-propionate. This chain is Urocanate hydratase, found in Acinetobacter baumannii (strain SDF).